The following is a 369-amino-acid chain: MSELVEKTSTLLKYLDLDQRGAVIAEYIWVDSAGHLRSKGRTLQRRVESVDELPEWNFDGSSTGQAPGHDSDVYLKPVAFYPDPFRRGDNIIVLAECWNNDGTPNKYNHRHEAAKLFEAHRAADIWFGLEQEYTLFDHNDNVYGWPKGGFPAPQGPYYCGVGAGKVYARDVVEAHYRACLYAGLRISGINAEVMPSQWEFQVGPCTGITMGDELWVGRYLLHRVAEEFGVKVSFHPKPLKGDWNGAGCHTNVSTREMRQPGGMRYIEEAIDKLSKRHKEHIKLYGSDNELRLTGRHETASMATFSSGVANRGASIRIPRSVSKEGFGYFEDRRPASNIDPYLVTGIICETICGAIENADMSKEFERESS.

Positions 23–102 constitute a GS beta-grasp domain; it reads VIAEYIWVDS…VLAECWNNDG (80 aa). The region spanning 109 to 369 is the GS catalytic domain; it reads HRHEAAKLFE…MSKEFERESS (261 aa).

It belongs to the glutamine synthetase family. Homooctamer.

The protein resides in the cytoplasm. It catalyses the reaction L-glutamate + NH4(+) + ATP = L-glutamine + ADP + phosphate + H(+). The protein is Glutamine synthetase (GLN1) of Eremothecium gossypii (strain ATCC 10895 / CBS 109.51 / FGSC 9923 / NRRL Y-1056) (Yeast).